The sequence spans 387 residues: Signal-regulatory protein gamma (387 aa).

A signal peptide spans 1 to 28 (MPVPASWPHPPGPFLLLTLLLGLTEVAG). One can recognise an Ig-like V-type domain in the interval 29–137 (EEELQMIQPE…ENVEFKSGPG (109 aa)). At 29-360 (EEELQMIQPE…QKDQSSDATP (332 aa)) the chain is on the extracellular side. 2 disulfide bridges follow: cysteine 53-cysteine 119 and cysteine 168-cysteine 226. Ig-like C1-type domains follow at residues 146-245 (PSAP…ANLS) and 252-340 (PTLE…LAVS). Residues asparagine 243, asparagine 268, asparagine 309, and asparagine 317 are each glycosylated (N-linked (GlcNAc...) asparagine). A disulfide bridge connects residues cysteine 271 and cysteine 329. A helical membrane pass occupies residues 361–383 (GPASSLTALLLIAVLLGPIYVPW). At 384-387 (KQKT) the chain is on the cytoplasmic side.

In terms of assembly, interacts with CD47. In terms of tissue distribution, detected in liver, and at very low levels in brain, heart, lung, pancreas, kidney, placenta and skeletal muscle. Expressed on CD4+ T-cells, CD8+ T-cells, CD56-bright natural killer (NK) cells, CD20+ cells, and all activated NK cells. Mainly present in the paracortical T-cell area of lymph nodes, with only sparse positive cells in the mantle and in the germinal center of B-cell follicles. In the thymus, primarily expressed in the medulla on mature T-lymphocytes that have undergone thymic selection.

Its subcellular location is the membrane. Its function is as follows. Probable immunoglobulin-like cell surface receptor. On binding with CD47, mediates cell-cell adhesion. Engagement on T-cells by CD47 on antigen-presenting cells results in enhanced antigen-specific T-cell proliferation and costimulates T-cell activation. The chain is Signal-regulatory protein gamma (SIRPG) from Homo sapiens (Human).